Reading from the N-terminus, the 296-residue chain is 3-methyl-2-oxobutanoate hydroxymethyltransferase (296 aa).

The interval 1–33 (MDASDTPTHPAPHPADPAATPYGAPTTPPRPLR) is disordered. Positions 16–25 (DPAATPYGAP) are enriched in low complexity. Mg(2+) is bound by residues Asp-77 and Asp-116. 3-methyl-2-oxobutanoate is bound by residues 77–78 (DS), Asp-116, and Lys-146. Glu-148 contacts Mg(2+). Glu-214 acts as the Proton acceptor in catalysis.

The protein belongs to the PanB family. Homodecamer; pentamer of dimers. Mg(2+) serves as cofactor.

It is found in the cytoplasm. The enzyme catalyses 3-methyl-2-oxobutanoate + (6R)-5,10-methylene-5,6,7,8-tetrahydrofolate + H2O = 2-dehydropantoate + (6S)-5,6,7,8-tetrahydrofolate. It participates in cofactor biosynthesis; (R)-pantothenate biosynthesis; (R)-pantoate from 3-methyl-2-oxobutanoate: step 1/2. Functionally, catalyzes the reversible reaction in which hydroxymethyl group from 5,10-methylenetetrahydrofolate is transferred onto alpha-ketoisovalerate to form ketopantoate. This is 3-methyl-2-oxobutanoate hydroxymethyltransferase from Frankia casuarinae (strain DSM 45818 / CECT 9043 / HFP020203 / CcI3).